Consider the following 239-residue polypeptide: 1-(5-phosphoribosyl)-5-[(5-phosphoribosylamino)methylideneamino] imidazole-4-carboxamide isomerase (239 aa).

D9 (proton acceptor) is an active-site residue. The active-site Proton donor is D131.

Belongs to the HisA/HisF family.

The protein resides in the cytoplasm. The enzyme catalyses 1-(5-phospho-beta-D-ribosyl)-5-[(5-phospho-beta-D-ribosylamino)methylideneamino]imidazole-4-carboxamide = 5-[(5-phospho-1-deoxy-D-ribulos-1-ylimino)methylamino]-1-(5-phospho-beta-D-ribosyl)imidazole-4-carboxamide. Its pathway is amino-acid biosynthesis; L-histidine biosynthesis; L-histidine from 5-phospho-alpha-D-ribose 1-diphosphate: step 4/9. The protein is 1-(5-phosphoribosyl)-5-[(5-phosphoribosylamino)methylideneamino] imidazole-4-carboxamide isomerase of Bacteroides fragilis (strain YCH46).